The sequence spans 131 residues: Small ribosomal subunit protein uS8 (131 aa).

Belongs to the universal ribosomal protein uS8 family. Part of the 30S ribosomal subunit. Contacts proteins S5 and S12.

Its function is as follows. One of the primary rRNA binding proteins, it binds directly to 16S rRNA central domain where it helps coordinate assembly of the platform of the 30S subunit. The chain is Small ribosomal subunit protein uS8 from Variovorax paradoxus (strain S110).